Consider the following 294-residue polypeptide: Bifunctional protein FolD (294 aa).

Residues 164-166, Ser-193, and Ile-234 contribute to the NADP(+) site; that span reads GRS.

Belongs to the tetrahydrofolate dehydrogenase/cyclohydrolase family. As to quaternary structure, homodimer.

It carries out the reaction (6R)-5,10-methylene-5,6,7,8-tetrahydrofolate + NADP(+) = (6R)-5,10-methenyltetrahydrofolate + NADPH. The catalysed reaction is (6R)-5,10-methenyltetrahydrofolate + H2O = (6R)-10-formyltetrahydrofolate + H(+). The protein operates within one-carbon metabolism; tetrahydrofolate interconversion. In terms of biological role, catalyzes the oxidation of 5,10-methylenetetrahydrofolate to 5,10-methenyltetrahydrofolate and then the hydrolysis of 5,10-methenyltetrahydrofolate to 10-formyltetrahydrofolate. This Flavobacterium psychrophilum (strain ATCC 49511 / DSM 21280 / CIP 103535 / JIP02/86) protein is Bifunctional protein FolD.